Here is a 462-residue protein sequence, read N- to C-terminus: Violaxanthin de-epoxidase, chloroplastic (462 aa).

The cysteines at positions 231 and 362 are disulfide-linked. The stretch at 372-437 forms a coiled coil; the sequence is IEKTVEEGER…RELSKEEMEF (66 aa). Residues 380 to 391 are involved in the binding to the thylakoid membrane; it reads ERIIVKEVEEIE.

The protein belongs to the calycin superfamily. Lipocalin family. Interacts in vitro with LTO1.

It is found in the plastid. The protein localises to the chloroplast thylakoid membrane. It catalyses the reaction all-trans-violaxanthin + 2 L-ascorbate = all-trans-zeaxanthin + 2 L-dehydroascorbate + 2 H2O. With respect to regulation, activity limited by low ascorbate availability. Feedback inhibition by zeaxanthin. Requires the presence of micelle-forming lipids such as monogalactosyldiacylglyceride (MGDG). Low concentration of bilayer forming lipids, such as digalactosyldiacylglyceride (DGDG) or phosphatidylcholine, supports a slower but nearly complete activity. 80% of the specific activity in lumenal chloroplast fractions is lost in vitro in the presence of reduced thioredoxin. Its function is as follows. Part of the xanthophyll (or violaxanthin) cycle for controlling the concentration of zeaxanthin in chloroplasts. Catalyzes the two-step mono de-epoxidation reaction. Stereospecific for all-trans xanthophylls. Zeaxanthin induces the dissipation of excitation energy in the chlorophyll of the light-harvesting protein complex of photosystem II. The protein is Violaxanthin de-epoxidase, chloroplastic of Arabidopsis thaliana (Mouse-ear cress).